The following is a 162-amino-acid chain: ATP synthase subunit b (162 aa).

Residues 6–28 form a helical membrane-spanning segment; the sequence is LVTFVLTIVNILVLFYLLKRFLF.

It belongs to the ATPase B chain family. As to quaternary structure, F-type ATPases have 2 components, F(1) - the catalytic core - and F(0) - the membrane proton channel. F(1) has five subunits: alpha(3), beta(3), gamma(1), delta(1), epsilon(1). F(0) has three main subunits: a(1), b(2) and c(10-14). The alpha and beta chains form an alternating ring which encloses part of the gamma chain. F(1) is attached to F(0) by a central stalk formed by the gamma and epsilon chains, while a peripheral stalk is formed by the delta and b chains.

It localises to the cell membrane. F(1)F(0) ATP synthase produces ATP from ADP in the presence of a proton or sodium gradient. F-type ATPases consist of two structural domains, F(1) containing the extramembraneous catalytic core and F(0) containing the membrane proton channel, linked together by a central stalk and a peripheral stalk. During catalysis, ATP synthesis in the catalytic domain of F(1) is coupled via a rotary mechanism of the central stalk subunits to proton translocation. In terms of biological role, component of the F(0) channel, it forms part of the peripheral stalk, linking F(1) to F(0). The polypeptide is ATP synthase subunit b (Natranaerobius thermophilus (strain ATCC BAA-1301 / DSM 18059 / JW/NM-WN-LF)).